The sequence spans 1117 residues: Mitochondrial protein cyt-4 (1117 aa).

The RNB domain occupies 561-916 (RQDFYTSTVY…LVHWQIQAAL (356 aa)). The tract at residues 705 to 730 (VVLEVGTPPSAEDEAPTRKMTKPDEL) is disordered. The segment covering 719 to 730 (APTRKMTKPDEL) has biased composition (basic and acidic residues).

It belongs to the RNR ribonuclease family. As to quaternary structure, homodimer.

It localises to the mitochondrion. In terms of biological role, required for RNA 5'- and 3'-end processing and splicing. May act on the RNA processing enzymes directly, or it may act on other regulatory molecules, which influence the activity or synthesis of these enzymes. The protein is Mitochondrial protein cyt-4 (cyt-4) of Neurospora crassa (strain ATCC 24698 / 74-OR23-1A / CBS 708.71 / DSM 1257 / FGSC 987).